A 402-amino-acid chain; its full sequence is Phosphoglycerate kinase (402 aa).

Substrate is bound by residues 24–26 (DFN), R40, 63–66 (HFGR), R122, and R155. ATP is bound by residues K206, G297, E328, and 357-360 (GGDS).

It belongs to the phosphoglycerate kinase family. In terms of assembly, monomer.

It is found in the cytoplasm. The catalysed reaction is (2R)-3-phosphoglycerate + ATP = (2R)-3-phospho-glyceroyl phosphate + ADP. It participates in carbohydrate degradation; glycolysis; pyruvate from D-glyceraldehyde 3-phosphate: step 2/5. The protein is Phosphoglycerate kinase of Prochlorococcus marinus (strain SARG / CCMP1375 / SS120).